Reading from the N-terminus, the 464-residue chain is Glutamate--tRNA ligase (464 aa).

The 'HIGH' region signature appears at 9–19 (PSPTGYLHIGG). The 'KMSKS' region motif lies at 242 to 246 (KISKR). Lys245 is a binding site for ATP.

This sequence belongs to the class-I aminoacyl-tRNA synthetase family. Glutamate--tRNA ligase type 1 subfamily. In terms of assembly, monomer.

It is found in the cytoplasm. It carries out the reaction tRNA(Glu) + L-glutamate + ATP = L-glutamyl-tRNA(Glu) + AMP + diphosphate. Its function is as follows. Catalyzes the attachment of glutamate to tRNA(Glu) in a two-step reaction: glutamate is first activated by ATP to form Glu-AMP and then transferred to the acceptor end of tRNA(Glu). The sequence is that of Glutamate--tRNA ligase from Neisseria meningitidis serogroup C (strain 053442).